The primary structure comprises 723 residues: Enolase-phosphatase E1 (723 aa).

Substrate is bound by residues 126 to 127 (SS) and Lys-160. A disordered region spans residues 239 to 723 (GAGAKRKIDE…TPTPPIEAES (485 aa)). Composition is skewed to basic and acidic residues over residues 262-284 (VKKDENGDAAAKKDETAKVDEPA) and 293-308 (AAKEEAAAPAEGKMEV). Positions 311–320 (AAAAAAPPAD) are enriched in low complexity. Composition is skewed to basic and acidic residues over residues 322–406 (AEEK…VVEE), 419–443 (AEEKEAEKKEEDKAAEPAAEKKPAE), 468–479 (EPAKEKPAEAEA), 487–496 (TKAEVVEKPA), 511–565 (SADK…KGEE), and 577–593 (VEAKEDAAKPEEKKSDA). Composition is skewed to low complexity over residues 596–606 (VSTTTTTTSTE) and 636–647 (NGEAEPAAEAVV). The segment covering 653–666 (GKHEEKGDSDKEND) has biased composition (basic and acidic residues).

Belongs to the HAD-like hydrolase superfamily. MasA/MtnC family. As to quaternary structure, monomer.

Its subcellular location is the cytoplasm. The protein resides in the nucleus. The catalysed reaction is 5-methylsulfanyl-2,3-dioxopentyl phosphate + H2O = 1,2-dihydroxy-5-(methylsulfanyl)pent-1-en-3-one + phosphate. It participates in amino-acid biosynthesis; L-methionine biosynthesis via salvage pathway; L-methionine from S-methyl-5-thio-alpha-D-ribose 1-phosphate: step 3/6. Its pathway is amino-acid biosynthesis; L-methionine biosynthesis via salvage pathway; L-methionine from S-methyl-5-thio-alpha-D-ribose 1-phosphate: step 4/6. Its function is as follows. Bifunctional enzyme that catalyzes the enolization of 2,3-diketo-5-methylthiopentyl-1-phosphate (DK-MTP-1-P) into the intermediate 2-hydroxy-3-keto-5-methylthiopentenyl-1-phosphate (HK-MTPenyl-1-P), which is then dephosphorylated to form the acireductone 1,2-dihydroxy-3-keto-5-methylthiopentene (DHK-MTPene). The sequence is that of Enolase-phosphatase E1 from Culex quinquefasciatus (Southern house mosquito).